A 494-amino-acid polypeptide reads, in one-letter code: Cytochrome c-552 (494 aa).

The first 31 residues, 1 to 31 (MEKKLKSWQGWLLFGGTMVVVFVLGMIAASV), serve as a signal peptide directing secretion. Histidine 116 contacts heme c. Heme is bound by residues cysteine 144, cysteine 147, and lysine 148. Cysteine 182, cysteine 185, histidine 186, cysteine 224, cysteine 227, and histidine 228 together coordinate heme c. Ca(2+) is bound by residues glutamate 230, tyrosine 231, lysine 276, and glutamine 278. Substrate is bound at residue tyrosine 231. Histidine 279 provides a ligand contact to substrate. Heme c is bound by residues histidine 290, cysteine 297, cysteine 300, histidine 301, histidine 315, cysteine 328, cysteine 331, histidine 332, and histidine 407.

This sequence belongs to the cytochrome c-552 family. Ca(2+) serves as cofactor. Heme c is required as a cofactor.

It is found in the periplasm. The enzyme catalyses 6 Fe(III)-[cytochrome c] + NH4(+) + 2 H2O = 6 Fe(II)-[cytochrome c] + nitrite + 8 H(+). Its pathway is nitrogen metabolism; nitrate reduction (assimilation). Functionally, catalyzes the reduction of nitrite to ammonia, consuming six electrons in the process. This Parabacteroides distasonis (strain ATCC 8503 / DSM 20701 / CIP 104284 / JCM 5825 / NCTC 11152) protein is Cytochrome c-552.